A 2095-amino-acid chain; its full sequence is Oxygen-regulated protein 1 (2095 aa).

2 consecutive Doublecortin domains span residues Lys-35 to Asp-117 and Arg-157 to Asp-236. 5 disordered regions span residues Gly-358 to Pro-379, Glu-643 to Pro-688, Gly-863 to Pro-887, Asn-1400 to Arg-1430, and Ser-1572 to Arg-1595. Residues Ile-1405–Arg-1419 show a composition bias toward basic and acidic residues. Residues Ser-1420–Arg-1430 are compositionally biased toward polar residues. Over residues His-1583–Arg-1595 the composition is skewed to basic and acidic residues.

In terms of assembly, interacts (via the doublecortin domains) with microtubules. Interacts with RP1L1. Interacts with MAK. In terms of tissue distribution, expressed in the cell bodies and inner segments of photoreceptors. Not found in liver, spleen, kidney, brain, thymus, muscle, heart, lung and testis.

It is found in the cytoplasm. It localises to the cytoskeleton. The protein localises to the cilium axoneme. The protein resides in the cell projection. Its subcellular location is the cilium. It is found in the photoreceptor outer segment. Microtubule-associated protein regulating the stability and length of the microtubule-based axoneme of photoreceptors. Required for the differentiation of photoreceptor cells, it plays a role in the organization of the outer segment of rod and cone photoreceptors ensuring the correct orientation and higher-order stacking of outer segment disks along the photoreceptor axoneme. This chain is Oxygen-regulated protein 1 (Rp1), found in Mus musculus (Mouse).